Reading from the N-terminus, the 148-residue chain is Large ribosomal subunit protein bL9 (148 aa).

Belongs to the bacterial ribosomal protein bL9 family.

Functionally, binds to the 23S rRNA. This Acidithiobacillus ferrooxidans (strain ATCC 23270 / DSM 14882 / CIP 104768 / NCIMB 8455) (Ferrobacillus ferrooxidans (strain ATCC 23270)) protein is Large ribosomal subunit protein bL9.